Reading from the N-terminus, the 164-residue chain is Histone H1 (164 aa).

Polar residues predominate over residues 1–10 (MAPRSSTSKS). Positions 1–164 (MAPRSSTSKS…KKSSKPAKKN (164 aa)) are disordered. Positions 16–27 (KDHKKAPIKKAI) are enriched in basic residues. T47 and T54 each carry phosphothreonine. Composition is skewed to basic and acidic residues over residues 49–61 (VKKD…ADTK), 69–89 (TMKE…GDKK), and 117–156 (TKKE…DAKK).

In terms of processing, cell-growth/division-associated phosphorylation by a CDC2-like kinase.

Its subcellular location is the nucleus. The protein localises to the chromosome. In terms of biological role, histones H1 are necessary for the condensation of nucleosome chains into higher-order structures. The chain is Histone H1 (HHO) from Tetrahymena thermophila (strain SB210).